The following is a 479-amino-acid chain: M-phase inducer phosphatase (479 aa).

A disordered region spans residues 182 to 218; that stretch reads MTESNTNSTTTPPPKTPETARDCFKRPEPPASANCSP. Positions 199–209 are enriched in basic and acidic residues; sequence ETARDCFKRPE. The 117-residue stretch at 316–432 folds into the Rhodanese domain; it reads KVASYRIIDC…FFESHVELCE (117 aa). C379 is a catalytic residue. A Phosphoserine modification is found at S455.

Belongs to the MPI phosphatase family.

It carries out the reaction O-phospho-L-tyrosyl-[protein] + H2O = L-tyrosyl-[protein] + phosphate. In terms of biological role, this protein functions as a dosage-dependent inducer in mitotic control. It is a tyrosine protein phosphatase required for progression of the cell cycle. It may directly dephosphorylate Cdk1 and activate the Cdk1 activity. In Drosophila melanogaster (Fruit fly), this protein is M-phase inducer phosphatase (stg).